Here is a 1139-residue protein sequence, read N- to C-terminus: MSYSNGNINCDIMPTISEDGVDNGGPIDEPSDRDNIEQLMMNMLEDRDKLQEQLENYKVQLENAGLRTKEVEKERDMMKRQFEVHTQNLPQELQTMTRELCLLKEQLLEKDEEIVELKAERNNTRLLLEHLECLVSRHERSLRMTVMKRQAQNHAGVSSEVEVLKALKSLFEHHKALDEKVRERLRVAMERVATLEEELSTKGDENSSLKARIATYAAEAEEAMASNAPINGSISSESANRLIEMQEALERMKTELANSLKQSTEITTRNAELEDQLTEDAREKHAAQESIVRLKNQICELDAQRTDQETRITTFESRFLTAQRESTCIRDLNDKLEHQLANKDAAVRLNEEKVHSLQERLELAEKQLAQSLKKAESLPSVEAELQQRMEALTAAEQKSVSAEERIQRLDRNIQELSAELERAVQRERMNEEHSQRLSSTVDKLLSESNDRLQLHLKERMQALDDKNRLTQQLDGTKKIYDQAERIKDRLQRDNESLRQEIEALRQQLYNARTAQFQSRMHAIPFTHAQNIVQQQPQASIAQQSAYQMYKQQPAQQYQTVGMRRPNKGRISALQDDPNKVQTLNEQEWDRLQQAHVLANVQQAFSSSPSLADVGQSTLPRPNTAVQHQQDDMMNSGMGMPSGMQGGMQGGMGGGQDAQMLASMLQDRLDAINTEIRLIQQEKHHAERVAEQLERSSREFYDDQGISTRSSPRASPQLDNMRQHKYNTLPANVSGDRRYDIYGNPQFVDDRMVRDLDYEPRRGYNQFDEMQYERDRMSPASSVASSTDGVLGGKKKRSNSSSGLKTLGRFFNKKKNSSSDLFKRNGDYSDGEQSGTEGNQKADYDRRKKKKHELLEEAMKARTPFALWNGPTVVAWLELWVGMPAWYVAACRANVKSGAIMSALSDQEIQKEIGISNPLHRLKLRLAIQEMVSLTSPSAPRTARLTLAFGDMNHEYIGNDWLPCLGLAQYRSAFMECLLDARMLEHLSKRDLRTHLRMVDTFHRTSLQYGIMCLKKVNYDKKVLADRRKACDNINTDLLVWSNERVQRWVEEIGLGVFSRNLVDSGIHGALIALDETFDASAFAYALQIGSQDVPNRQLLEKKFIGLVNDHRQQSDPHPRSGSSRKNDSIAKSYEFHLYT.

Coiled-coil stretches lie at residues 30 to 144 (PSDR…SLRM), 172 to 298 (EHHK…KNQI), 329 to 517 (IRDL…AQFQ), and 655 to 701 (QDAQ…EFYD). Disordered regions lie at residues 700-720 (YDDQGISTRSSPRASPQLDNM) and 764-847 (NQFD…DRRK). Polar residues-rich tracts occupy residues 704–719 (GISTRSSPRASPQLDN) and 778–787 (PASSVASSTD). SAM domains lie at 867 to 933 (WNGP…MVSL), 952 to 1016 (NHEY…LKKV), and 1040 to 1109 (WSNE…LVND).

It belongs to the liprin family. Liprin-alpha subfamily. In terms of tissue distribution, detected in vulval muscle and other cells near the vulva; in neurons located in the lateral ganglion, posterior ganglion, ventral cord and lateral body; and in pharyngeal and body wall muscle cells.

It localises to the synapse. Its function is as follows. May play a role in regulating the structure of the neuronal region, called the active zone, from which synaptic vesicles send neurotransmitter signals across the synapse. This may be in association with the liprin-beta protein hlb-1. The sequence is that of Liprin-alpha from Caenorhabditis elegans.